The primary structure comprises 227 residues: MAYPVQLGFQDAASPIMEELLYFHDHTLMIMFLISSLVLYIISLMLTTELIHTSTMDAQEVETVWTILPAVILILIALPSLRILYMMDEISTPSLTLKTMGHQWYWSYEYTDYENLCFDSYMAPPSDLKPGELRLLEVDNRVVLPTELPIRMLISSEDVLHSWTIPSLGVKTDAIPGRLNQATLMASRPGVYYGQCSEICGANHSFMPIVLELVPLKHFEEWLLSML.

Residues 1 to 14 (MAYPVQLGFQDAAS) are Mitochondrial intermembrane-facing. A helical membrane pass occupies residues 15–45 (PIMEELLYFHDHTLMIMFLISSLVLYIISLM). Residues 46–59 (LTTELIHTSTMDAQ) lie on the Mitochondrial matrix side of the membrane. The helical transmembrane segment at 60-87 (EVETVWTILPAVILILIALPSLRILYMM) threads the bilayer. Over 88 to 227 (DEISTPSLTL…HFEEWLLSML (140 aa)) the chain is Mitochondrial intermembrane. His-161, Cys-196, Glu-198, Cys-200, His-204, and Met-207 together coordinate Cu cation. Glu-198 lines the Mg(2+) pocket.

Belongs to the cytochrome c oxidase subunit 2 family. In terms of assembly, component of the cytochrome c oxidase (complex IV, CIV), a multisubunit enzyme composed of 14 subunits. The complex is composed of a catalytic core of 3 subunits MT-CO1, MT-CO2 and MT-CO3, encoded in the mitochondrial DNA, and 11 supernumerary subunits COX4I, COX5A, COX5B, COX6A, COX6B, COX6C, COX7A, COX7B, COX7C, COX8 and NDUFA4, which are encoded in the nuclear genome. The complex exists as a monomer or a dimer and forms supercomplexes (SCs) in the inner mitochondrial membrane with NADH-ubiquinone oxidoreductase (complex I, CI) and ubiquinol-cytochrome c oxidoreductase (cytochrome b-c1 complex, complex III, CIII), resulting in different assemblies (supercomplex SCI(1)III(2)IV(1) and megacomplex MCI(2)III(2)IV(2)). Found in a complex with TMEM177, COA6, COX18, COX20, SCO1 and SCO2. Interacts with TMEM177 in a COX20-dependent manner. Interacts with COX20. Interacts with COX16. It depends on Cu cation as a cofactor.

The protein resides in the mitochondrion inner membrane. The catalysed reaction is 4 Fe(II)-[cytochrome c] + O2 + 8 H(+)(in) = 4 Fe(III)-[cytochrome c] + 2 H2O + 4 H(+)(out). Component of the cytochrome c oxidase, the last enzyme in the mitochondrial electron transport chain which drives oxidative phosphorylation. The respiratory chain contains 3 multisubunit complexes succinate dehydrogenase (complex II, CII), ubiquinol-cytochrome c oxidoreductase (cytochrome b-c1 complex, complex III, CIII) and cytochrome c oxidase (complex IV, CIV), that cooperate to transfer electrons derived from NADH and succinate to molecular oxygen, creating an electrochemical gradient over the inner membrane that drives transmembrane transport and the ATP synthase. Cytochrome c oxidase is the component of the respiratory chain that catalyzes the reduction of oxygen to water. Electrons originating from reduced cytochrome c in the intermembrane space (IMS) are transferred via the dinuclear copper A center (CU(A)) of subunit 2 and heme A of subunit 1 to the active site in subunit 1, a binuclear center (BNC) formed by heme A3 and copper B (CU(B)). The BNC reduces molecular oxygen to 2 water molecules using 4 electrons from cytochrome c in the IMS and 4 protons from the mitochondrial matrix. The protein is Cytochrome c oxidase subunit 2 (MT-CO2) of Eulemur macaco (Black lemur).